The sequence spans 221 residues: Large ribosomal subunit protein uL3 (221 aa).

A disordered region spans residues 140 to 160 (GGPKTHGSGFHRHAGSIGMRS).

Belongs to the universal ribosomal protein uL3 family. Part of the 50S ribosomal subunit. Forms a cluster with proteins L14 and L19.

One of the primary rRNA binding proteins, it binds directly near the 3'-end of the 23S rRNA, where it nucleates assembly of the 50S subunit. This Chlamydia caviae (strain ATCC VR-813 / DSM 19441 / 03DC25 / GPIC) (Chlamydophila caviae) protein is Large ribosomal subunit protein uL3.